Reading from the N-terminus, the 244-residue chain is Pyridoxine 5'-phosphate synthase (244 aa).

3-amino-2-oxopropyl phosphate is bound at residue Asn-12. Residue 14 to 15 (DH) coordinates 1-deoxy-D-xylulose 5-phosphate. 3-amino-2-oxopropyl phosphate is bound at residue Arg-23. The active-site Proton acceptor is the His-48. The 1-deoxy-D-xylulose 5-phosphate site is built by Arg-50 and His-55. Glu-75 acts as the Proton acceptor in catalysis. Position 105 (Thr-105) interacts with 1-deoxy-D-xylulose 5-phosphate. The active-site Proton donor is His-196. 3-amino-2-oxopropyl phosphate-binding positions include Gly-197 and 218–219 (GH).

It belongs to the PNP synthase family. In terms of assembly, homooctamer; tetramer of dimers.

It is found in the cytoplasm. It catalyses the reaction 3-amino-2-oxopropyl phosphate + 1-deoxy-D-xylulose 5-phosphate = pyridoxine 5'-phosphate + phosphate + 2 H2O + H(+). Its pathway is cofactor biosynthesis; pyridoxine 5'-phosphate biosynthesis; pyridoxine 5'-phosphate from D-erythrose 4-phosphate: step 5/5. In terms of biological role, catalyzes the complicated ring closure reaction between the two acyclic compounds 1-deoxy-D-xylulose-5-phosphate (DXP) and 3-amino-2-oxopropyl phosphate (1-amino-acetone-3-phosphate or AAP) to form pyridoxine 5'-phosphate (PNP) and inorganic phosphate. This Alcanivorax borkumensis (strain ATCC 700651 / DSM 11573 / NCIMB 13689 / SK2) protein is Pyridoxine 5'-phosphate synthase.